Reading from the N-terminus, the 763-residue chain is Hormone-sensitive lipase (763 aa).

The Involved in the stabilization of the negatively charged intermediate by the formation of the oxyanion hole motif lies at 350–352; the sequence is HGG. Serine 424 is an active-site residue. Phosphoserine is present on serine 552. Phosphoserine; by AMPK is present on serine 554. Phosphoserine is present on residues serine 595, serine 627, and serine 649. Basic and acidic residues predominate over residues 616–627; that stretch reads AREEAEAKEGLS. Residues 616 to 652 are disordered; that stretch reads AREEAEAKEGLSAKDGSSRVSNAFPEGFHPRRTSQGA. Active-site residues include aspartate 692 and histidine 722.

This sequence belongs to the 'GDXG' lipolytic enzyme family. As to quaternary structure, monomer and homodimer. Interacts with CAVIN1 in the adipocyte cytoplasm. Interacts with PLIN5. Phosphorylation by AMPK reduces its translocation towards the lipid droplets.

Its subcellular location is the cell membrane. The protein localises to the membrane. It is found in the caveola. It localises to the cytoplasm. The protein resides in the cytosol. Its subcellular location is the lipid droplet. The catalysed reaction is a diacylglycerol + H2O = a monoacylglycerol + a fatty acid + H(+). It catalyses the reaction a triacylglycerol + H2O = a diacylglycerol + a fatty acid + H(+). It carries out the reaction a monoacylglycerol + H2O = glycerol + a fatty acid + H(+). The enzyme catalyses Hydrolyzes glycerol monoesters of long-chain fatty acids.. The catalysed reaction is 1,2-di-(9Z-octadecenoyl)-glycerol + (9Z)-octadecenoate + H(+) = 1,2,3-tri-(9Z-octadecenoyl)-glycerol + H2O. It catalyses the reaction 2,3-di-(9Z)-octadecenoyl-sn-glycerol + H2O = 2-(9Z-octadecenoyl)-glycerol + (9Z)-octadecenoate + H(+). It carries out the reaction cholesteryl (9Z-octadecenoate) + H2O = cholesterol + (9Z)-octadecenoate + H(+). The enzyme catalyses 1,2,3-tri-(9Z-octadecenoyl)-glycerol + H2O = di-(9Z)-octadecenoylglycerol + (9Z)-octadecenoate + H(+). The catalysed reaction is all-trans-retinyl hexadecanoate + H2O = all-trans-retinol + hexadecanoate + H(+). It catalyses the reaction 1,2-di-(9Z-octadecenoyl)-glycerol + H2O = (9Z-octadecenoyl)-glycerol + (9Z)-octadecenoate + H(+). It carries out the reaction 2-(5Z,8Z,11Z,14Z-eicosatetraenoyl)-glycerol + H2O = glycerol + (5Z,8Z,11Z,14Z)-eicosatetraenoate + H(+). The enzyme catalyses 1-(9Z-octadecenoyl)-glycerol + H2O = glycerol + (9Z)-octadecenoate + H(+). The catalysed reaction is 2-(9Z-octadecenoyl)-glycerol + H2O = glycerol + (9Z)-octadecenoate + H(+). It catalyses the reaction 1-O-hexadecyl-2-acetyl-sn-glycerol + H2O = 1-O-hexadecyl-sn-glycerol + acetate + H(+). It carries out the reaction 1,2-di-(9Z-octadecenoyl)-sn-glycerol + H2O = (9Z-octadecenoyl)-glycerol + (9Z)-octadecenoate + H(+). The enzyme catalyses 1,3-di-(9Z-octadecenoyl)-glycerol + H2O = 1-(9Z-octadecenoyl)-glycerol + (9Z)-octadecenoate + H(+). The catalysed reaction is 1,2-di-(9Z-octadecenoyl)-glycerol + H2O = 2-(9Z-octadecenoyl)-glycerol + (9Z)-octadecenoate + H(+). The protein operates within glycerolipid metabolism; triacylglycerol degradation. In terms of biological role, lipase with broad substrate specificity, catalyzing the hydrolysis of triacylglycerols (TAGs), diacylglycerols (DAGs), monoacylglycerols (MAGs), cholesteryl esters and retinyl esters. Shows a preferential hydrolysis of DAGs over TAGs and MAGs. Preferentially hydrolyzes fatty acid (FA) esters at the sn-3 position of the glycerol backbone in DAGs and FA esters at the sn-1 and sn-2 positions of the glycerol backbone in TAGs. Catalyzes the hydrolysis of 2-arachidonoylglycerol, an endocannabinoid and of 2-acetyl monoalkylglycerol ether, the penultimate precursor of the pathway for de novo synthesis of platelet-activating factor. In adipose tissue and heart, it primarily hydrolyzes stored triglycerides to free fatty acids, while in steroidogenic tissues, it principally converts cholesteryl esters to free cholesterol for steroid hormone production. The sequence is that of Hormone-sensitive lipase (LIPE) from Ictidomys tridecemlineatus (Thirteen-lined ground squirrel).